The chain runs to 352 residues: Selenide, water dikinase (352 aa).

Residue cysteine 23 is part of the active site. ATP contacts are provided by residues lysine 26 and serine 54 to aspartate 56. Aspartate 57 is a binding site for Mg(2+). ATP contacts are provided by residues aspartate 74, aspartate 97, and glycine 145–serine 147. Aspartate 97 contributes to the Mg(2+) binding site. Position 233 (aspartate 233) interacts with Mg(2+).

Belongs to the selenophosphate synthase 1 family. Class I subfamily. Homodimer. Mg(2+) is required as a cofactor.

It carries out the reaction hydrogenselenide + ATP + H2O = selenophosphate + AMP + phosphate + 2 H(+). Its function is as follows. Synthesizes selenophosphate from selenide and ATP. The chain is Selenide, water dikinase from Shewanella sp. (strain MR-7).